The chain runs to 326 residues: Cathepsin L-like proteinase (326 aa).

Positions 1–15 (MRLFILAVLTVGVLG) are cleaved as a signal peptide. Positions 16–106 (SNDDLWHQWK…HGVPYEANNR (91 aa)) are cleaved as a propeptide — activation peptide. Position 109 is a 3-hydroxyproline; partial (P109). Disulfide bonds link C129-C172, C163-C204, and C262-C311. Residue C132 is part of the active site. P196 carries the 3-hydroxyproline; partial modification. Residues H269 and N289 contribute to the active site.

The protein belongs to the peptidase C1 family. As to quaternary structure, monomer. Contains cysteine residues involved in intramolecular disulfide bonding.

Its subcellular location is the secreted. With respect to regulation, strongly inhibited by Antipain, E64 and Leupeptin, and weakly inhibited by iodoacetic acid (IAA) and phenylmethylsulfonyl fluoride (PMSF). Requires the presence of dithiothreitol (DTT) for activity. Thiol protease. Probably involved in interaction with host tissues. Displays a similar activity to that of papain. Has high activity on Z-Phe-Arg-NHMec, but no activity on Z-Arg-NHMec. The chain is Cathepsin L-like proteinase from Fasciola hepatica (Liver fluke).